Here is a 432-residue protein sequence, read N- to C-terminus: Serine--tRNA ligase (432 aa).

Position 230-232 (230-232) interacts with L-serine; the sequence is TAE. 261 to 263 contacts ATP; sequence RSE. An L-serine-binding site is contributed by Glu-284. Residue 348 to 351 participates in ATP binding; it reads EVSS. Residue Ser-383 participates in L-serine binding.

It belongs to the class-II aminoacyl-tRNA synthetase family. Type-1 seryl-tRNA synthetase subfamily. In terms of assembly, homodimer. The tRNA molecule binds across the dimer.

It localises to the cytoplasm. It catalyses the reaction tRNA(Ser) + L-serine + ATP = L-seryl-tRNA(Ser) + AMP + diphosphate + H(+). The enzyme catalyses tRNA(Sec) + L-serine + ATP = L-seryl-tRNA(Sec) + AMP + diphosphate + H(+). The protein operates within aminoacyl-tRNA biosynthesis; selenocysteinyl-tRNA(Sec) biosynthesis; L-seryl-tRNA(Sec) from L-serine and tRNA(Sec): step 1/1. Functionally, catalyzes the attachment of serine to tRNA(Ser). Is also able to aminoacylate tRNA(Sec) with serine, to form the misacylated tRNA L-seryl-tRNA(Sec), which will be further converted into selenocysteinyl-tRNA(Sec). This is Serine--tRNA ligase from Limosilactobacillus fermentum (strain NBRC 3956 / LMG 18251) (Lactobacillus fermentum).